The primary structure comprises 388 residues: Probable acetyl-CoA acetyltransferase (388 aa).

Cysteine 84 serves as the catalytic Acyl-thioester intermediate. An Isoglutamyl lysine isopeptide (Lys-Gln) (interchain with Q-Cter in protein Pup) cross-link involves residue lysine 187. Residues histidine 345 and cysteine 375 each act as proton acceptor in the active site.

It belongs to the thiolase-like superfamily. Thiolase family.

The enzyme catalyses 2 acetyl-CoA = acetoacetyl-CoA + CoA. This Mycolicibacterium smegmatis (strain ATCC 700084 / mc(2)155) (Mycobacterium smegmatis) protein is Probable acetyl-CoA acetyltransferase.